Here is a 343-residue protein sequence, read N- to C-terminus: Tetraacyldisaccharide 4'-kinase (343 aa).

Residue H65–T72 coordinates ATP.

This sequence belongs to the LpxK family.

It carries out the reaction a lipid A disaccharide + ATP = a lipid IVA + ADP + H(+). The protein operates within glycolipid biosynthesis; lipid IV(A) biosynthesis; lipid IV(A) from (3R)-3-hydroxytetradecanoyl-[acyl-carrier-protein] and UDP-N-acetyl-alpha-D-glucosamine: step 6/6. In terms of biological role, transfers the gamma-phosphate of ATP to the 4'-position of a tetraacyldisaccharide 1-phosphate intermediate (termed DS-1-P) to form tetraacyldisaccharide 1,4'-bis-phosphate (lipid IVA). The sequence is that of Tetraacyldisaccharide 4'-kinase from Neisseria gonorrhoeae (strain ATCC 700825 / FA 1090).